The primary structure comprises 330 residues: 5'-AMP-activated protein kinase subunit gamma-1 (330 aa).

Polar residues predominate over residues 1-13 (METVTSSDSSSAV). The disordered stretch occupies residues 1–26 (METVTSSDSSSAVENEHPQDTPESNN). CBS domains lie at 43–103 (PTSS…KSAL), 125–187 (SFKP…PKPE), and 198–260 (IGTY…NLDV). ADP contacts are provided by residues R70, 85–90 (MLTITD), V130, 151–152 (HR), and K170. Residues R70, 85 to 90 (MLTITD), V130, H151, 151 to 152 (HR), K170, T200, A205, 226 to 227 (SA), and 242 to 245 (SKFD) each bind AMP. ATP is bound by residues R70, 85–90 (MLTITD), V130, 151–152 (HR), R152, and K170. The short motif at 138-159 (LFDAVSSLIRNKIHRLPVIDPE) is the AMPK pseudosubstrate element. 242-245 (SKFD) contacts ADP. 242–245 (SKFD) lines the ATP pocket. A Phosphoserine; by ULK1 modification is found at S261. A Phosphothreonine; by ULK1 modification is found at T263. ADP is bound at residue R269. Residue R269 coordinates AMP. R269 lines the ATP pocket. A Phosphoserine; by ULK1 modification is found at S270. Positions 272 to 329 (YFEGVLKCYLHETLETIINRLVEAEVHRLVVVDENDVVKGIVSLSDILQALVLTGGEK) constitute a CBS 4 domain. Residues L277 and 298–299 (HR) each bind ADP. AMP contacts are provided by residues L277, H298, 298–299 (HR), and 314–317 (SLSD). ATP is bound by residues L277 and 298–299 (HR).

The protein belongs to the 5'-AMP-activated protein kinase gamma subunit family. As to quaternary structure, AMPK is a heterotrimer of an alpha catalytic subunit (PRKAA1 or PRKAA2), a beta (PRKAB1 or PRKAB2) and a gamma non-catalytic subunits (PRKAG1, PRKAG2 or PRKAG3). Interacts with FNIP1 and FNIP2. Phosphorylated by ULK1 and ULK2; leading to negatively regulate AMPK activity and suggesting the existence of a regulatory feedback loop between ULK1, ULK2 and AMPK. In terms of processing, glycosylated; O-GlcNAcylated by OGT, promoting the AMP-activated protein kinase (AMPK) activity.

In terms of biological role, AMP/ATP-binding subunit of AMP-activated protein kinase (AMPK), an energy sensor protein kinase that plays a key role in regulating cellular energy metabolism. In response to reduction of intracellular ATP levels, AMPK activates energy-producing pathways and inhibits energy-consuming processes: inhibits protein, carbohydrate and lipid biosynthesis, as well as cell growth and proliferation. AMPK acts via direct phosphorylation of metabolic enzymes, and by longer-term effects via phosphorylation of transcription regulators. Also acts as a regulator of cellular polarity by remodeling the actin cytoskeleton; probably by indirectly activating myosin. Gamma non-catalytic subunit mediates binding to AMP, ADP and ATP, leading to activate or inhibit AMPK: AMP-binding results in allosteric activation of alpha catalytic subunit (PRKAA1 or PRKAA2) both by inducing phosphorylation and preventing dephosphorylation of catalytic subunits. ADP also stimulates phosphorylation, without stimulating already phosphorylated catalytic subunit. ATP promotes dephosphorylation of catalytic subunit, rendering the AMPK enzyme inactive. The chain is 5'-AMP-activated protein kinase subunit gamma-1 (PRKAG1) from Sus scrofa (Pig).